We begin with the raw amino-acid sequence, 60 residues long: Large ribosomal subunit protein bL32 (60 aa).

Basic residues predominate over residues Met-1–Arg-16. The disordered stretch occupies residues Met-1 to Ala-60. Over residues Val-28–Leu-44 the composition is skewed to basic and acidic residues.

Belongs to the bacterial ribosomal protein bL32 family.

The chain is Large ribosomal subunit protein bL32 from Chelativorans sp. (strain BNC1).